Here is a 60-residue protein sequence, read N- to C-terminus: Large ribosomal subunit protein bL32 (60 aa).

The disordered stretch occupies residues 1–21; that stretch reads MAVPRNRHSNARKNIRRSHDA.

The protein belongs to the bacterial ribosomal protein bL32 family.

The protein is Large ribosomal subunit protein bL32 of Chlamydia felis (strain Fe/C-56) (Chlamydophila felis).